Here is a 274-residue protein sequence, read N- to C-terminus: Large ribosomal subunit protein uL2cz/uL2cy (274 aa).

2 disordered regions span residues 1-23 (MAIH…SQVK) and 224-274 (NPVD…RRSK).

Belongs to the universal ribosomal protein uL2 family. As to quaternary structure, part of the 50S ribosomal subunit.

It is found in the plastid. The protein localises to the chloroplast. This is Large ribosomal subunit protein uL2cz/uL2cy (rpl2-A) from Vitis vinifera (Grape).